A 633-amino-acid chain; its full sequence is tRNA uridine 5-carboxymethylaminomethyl modification enzyme MnmG (633 aa).

FAD contacts are provided by residues G15 to G20, V127, and S182. Residue G276–F290 participates in NAD(+) binding. Q373 provides a ligand contact to FAD.

It belongs to the MnmG family. Homodimer. Heterotetramer of two MnmE and two MnmG subunits. Requires FAD as cofactor.

It is found in the cytoplasm. Its function is as follows. NAD-binding protein involved in the addition of a carboxymethylaminomethyl (cmnm) group at the wobble position (U34) of certain tRNAs, forming tRNA-cmnm(5)s(2)U34. In Streptococcus thermophilus (strain ATCC BAA-491 / LMD-9), this protein is tRNA uridine 5-carboxymethylaminomethyl modification enzyme MnmG.